A 156-amino-acid polypeptide reads, in one-letter code: Small ribosomal subunit protein uS7 (156 aa).

The protein belongs to the universal ribosomal protein uS7 family. In terms of assembly, part of the 30S ribosomal subunit. Contacts proteins S9 and S11.

One of the primary rRNA binding proteins, it binds directly to 16S rRNA where it nucleates assembly of the head domain of the 30S subunit. Is located at the subunit interface close to the decoding center, probably blocks exit of the E-site tRNA. In Levilactobacillus brevis (strain ATCC 367 / BCRC 12310 / CIP 105137 / JCM 1170 / LMG 11437 / NCIMB 947 / NCTC 947) (Lactobacillus brevis), this protein is Small ribosomal subunit protein uS7.